The following is a 263-amino-acid chain: Translation initiation factor 2 subunit alpha (263 aa).

An S1 motif domain is found at 12–83 (GEILIATVKQ…RKGTIDVSLK (72 aa)).

The protein belongs to the eIF-2-alpha family. Heterotrimer composed of an alpha, a beta and a gamma chain.

In terms of biological role, eIF-2 functions in the early steps of protein synthesis by forming a ternary complex with GTP and initiator tRNA. This chain is Translation initiation factor 2 subunit alpha, found in Sulfurisphaera tokodaii (strain DSM 16993 / JCM 10545 / NBRC 100140 / 7) (Sulfolobus tokodaii).